The primary structure comprises 284 residues: Quinate/shikimate dehydrogenase (NAD(+)) (284 aa).

Shikimate-binding residues include Ser18 and Thr70. L-quinate contacts are provided by residues 18–20 (SRT) and Thr70. The Proton acceptor role is filled by Tyr73. 3 residues coordinate shikimate: Lys74, Asn95, and Asp111. Positions 74, 95, and 111 each coordinate L-quinate. Residues 137–138 (GG), Asp159, Arg164, 203–206 (TPMG), Ala214, Val229, and Gly252 contribute to the NAD(+) site. Gln259 is a shikimate binding site. Gln259 contributes to the L-quinate binding site.

Belongs to the shikimate dehydrogenase family. As to quaternary structure, homodimer.

The enzyme catalyses L-quinate + NAD(+) = 3-dehydroquinate + NADH + H(+). It catalyses the reaction shikimate + NAD(+) = 3-dehydroshikimate + NADH + H(+). Its pathway is metabolic intermediate biosynthesis; chorismate biosynthesis; chorismate from D-erythrose 4-phosphate and phosphoenolpyruvate: step 4/7. It participates in aromatic compound metabolism; 3,4-dihydroxybenzoate biosynthesis; 3-dehydroquinate from D-quinate (NAD(+) route). Its function is as follows. Involved in the biosynthesis of the chorismate, which leads to the biosynthesis of aromatic amino acids, and plays a key role in the quinate degradation pathway. Catalyzes the NAD(+)-dependent oxidation of both quinate and shikimate to 3-dehydroquinate and 3-dehydroshikimate, respectively. It can only use NAD. This chain is Quinate/shikimate dehydrogenase (NAD(+)), found in Corynebacterium efficiens (strain DSM 44549 / YS-314 / AJ 12310 / JCM 11189 / NBRC 100395).